Reading from the N-terminus, the 1985-residue chain is Treslin (1985 aa).

Disordered stretches follow at residues 574 to 609 (AQKA…LKPT), 791 to 858 (EEKS…QPNK), 894 to 974 (IQET…SIVE), 999 to 1033 (RRNS…RPGS), 1072 to 1156 (VYKT…LWGR), 1184 to 1243 (VKTP…PSGY), 1849 to 1875 (HEDS…QSRS), and 1938 to 1966 (FSDG…SPFR). The segment covering 823–837 (RSAKKRRSTALARHR) has biased composition (basic residues). A compositionally biased stretch (low complexity) spans 964–974 (SESNSNISIVE). 2 stretches are compositionally biased toward polar residues: residues 999–1026 (RRNS…QLQQ) and 1085–1097 (SKNI…QSGN). The span at 1105–1114 (TPYTPRTPSR) shows a compositional bias: low complexity. 2 stretches are compositionally biased toward basic and acidic residues: residues 1144–1156 (KPEE…LWGR) and 1191–1200 (QRLESKDFRT). Residues 1201-1224 (PSRTPTRSNNTTPAKQSMQISNTP) are compositionally biased toward polar residues. Residues 1225–1238 (RKSDLKHPQEHESR) are compositionally biased toward basic and acidic residues.

The protein belongs to the treslin family. As to quaternary structure, interacts with topbp1 (via BRCT domains); interaction is cdk2-dependent. Component of the replisome complex. Post-translationally, phosphorylated during interphase. Cdk2 promotes both phosphorylation and formation of a ticrr-topbp1 complex.

It localises to the nucleus. In terms of biological role, regulator of DNA replication and S/M and G2/M checkpoints. Regulates the triggering of DNA replication initiation via its interaction with topbp1 by participating in cdk2-mediated loading of cdc45l onto replication origins. Required for the transition from pre-replication complex (pre-RC) to pre-initiation complex (pre-IC). Required to prevent mitotic entry after treatment with ionizing radiation. The sequence is that of Treslin (ticrr) from Xenopus laevis (African clawed frog).